The primary structure comprises 819 residues: DNA topoisomerase 4 subunit A (819 aa).

The 467-residue stretch at 30–496 (LPDIRDGLKP…QIIEIDTASL (467 aa)) folds into the Topo IIA-type catalytic domain. Tyr-118 serves as the catalytic O-(5'-phospho-DNA)-tyrosine intermediate.

The protein belongs to the type II topoisomerase GyrA/ParC subunit family. ParC type 2 subfamily. In terms of assembly, heterotetramer composed of ParC and ParE.

The protein resides in the cell membrane. It catalyses the reaction ATP-dependent breakage, passage and rejoining of double-stranded DNA.. In terms of biological role, topoisomerase IV is essential for chromosome segregation. It relaxes supercoiled DNA. Performs the decatenation events required during the replication of a circular DNA molecule. This Streptococcus pyogenes serotype M3 (strain ATCC BAA-595 / MGAS315) protein is DNA topoisomerase 4 subunit A.